The sequence spans 125 residues: Fluoride-specific ion channel FluC (125 aa).

Helical transmembrane passes span Phe7 to Val27, Gly36 to Ser56, Pro63 to Phe83, and Phe96 to Cys116. Gly75 and Thr78 together coordinate Na(+).

The protein belongs to the fluoride channel Fluc/FEX (TC 1.A.43) family.

The protein localises to the cell inner membrane. It carries out the reaction fluoride(in) = fluoride(out). Its activity is regulated as follows. Na(+) is not transported, but it plays an essential structural role and its presence is essential for fluoride channel function. In terms of biological role, fluoride-specific ion channel. Important for reducing fluoride concentration in the cell, thus reducing its toxicity. This chain is Fluoride-specific ion channel FluC, found in Elusimicrobium minutum (strain Pei191).